Reading from the N-terminus, the 115-residue chain is Parathyroid hormone (115 aa).

Residues 1-25 form the signal peptide; the sequence is MMSAKDMVKVMIVMLAICFLARSDG. Positions 26–31 are excised as a propeptide; sequence KSVKKR. The segment at 51 to 69 is important for receptor binding; the sequence is RVEWLRKKLQDVHNFVALG. The disordered stretch occupies residues 77-99; that stretch reads GSSQRPRKKEDNVLVESHQKSLG. Positions 84-99 are enriched in basic and acidic residues; sequence KKEDNVLVESHQKSLG.

The protein belongs to the parathyroid hormone family. In terms of assembly, interacts with PTH1R (via N-terminal extracellular domain).

Its subcellular location is the secreted. Its function is as follows. Parathyroid hormone elevates calcium level by dissolving the salts in bone and preventing their renal excretion. Acts by binding to its receptor, PTH1R, activating G protein-coupled receptor signaling. Stimulates [1-14C]-2-deoxy-D-glucose (2DG) transport and glycogen synthesis in osteoblastic cells. This Bos taurus (Bovine) protein is Parathyroid hormone.